A 604-amino-acid chain; its full sequence is MRLSQMLFVTLRDDPADAEIPSHKLLLRAGYIRRIGSGIYAYLPLMWRVLQKVSQIVREEMNAAGAQECLLPQLQPSELWKESGRWDTYTKAEGIMFSLIDRREQQLGLGPTHEEVITAIARDMIRSYRQLPLHLYQLQTKFRDEIRPRFGLMRGREFIMKDGYSFHVDEDSLKKTYQDMYQAYSNMLRRAGLAFRPVEADSGAIGGSGSTEFMVLAEAGEDEVLYTDDGKYAANVEKAVSLPADAEPSQFTAFEKRETPGTETIEKVTQFLKASPTQIVKNVLYQTVYDNGVTVLVLVIIRGDQEVNEVKLQNELTKLAPNYGAKAIINLTVPSAENQQTWTAKSLPLGYIAPDIADEYIAANKQIHPKFVRFVDKTAVDLKNFITGANEAGYHVVGANWGEQFPLPEIVVDVRKARPGDRAIHDSTQILKSARGIEVGHIFQLGTKYSQALGATYTNEQGEEKPLVMGCYGVGVSRLAQSAVEQSYDKDGIIWPVAIAPYHAIVTIPNINDAQQVEIAERLYTELNQSGVETLLDDRNERAGVKFKDADLIGIPYRIVTGRAITNGKVEIVERATRQSQEIPIDEVITTLQQWIKAAIEQKN.

Belongs to the class-II aminoacyl-tRNA synthetase family. ProS type 1 subfamily. Homodimer.

It localises to the cytoplasm. It catalyses the reaction tRNA(Pro) + L-proline + ATP = L-prolyl-tRNA(Pro) + AMP + diphosphate. Functionally, catalyzes the attachment of proline to tRNA(Pro) in a two-step reaction: proline is first activated by ATP to form Pro-AMP and then transferred to the acceptor end of tRNA(Pro). As ProRS can inadvertently accommodate and process non-cognate amino acids such as alanine and cysteine, to avoid such errors it has two additional distinct editing activities against alanine. One activity is designated as 'pretransfer' editing and involves the tRNA(Pro)-independent hydrolysis of activated Ala-AMP. The other activity is designated 'posttransfer' editing and involves deacylation of mischarged Ala-tRNA(Pro). The misacylated Cys-tRNA(Pro) is not edited by ProRS. In Trichormus variabilis (strain ATCC 29413 / PCC 7937) (Anabaena variabilis), this protein is Proline--tRNA ligase.